We begin with the raw amino-acid sequence, 836 residues long: Sucrose synthase 5 (836 aa).

The segment at 270–748 (RIFNVVIFSV…GLQRINECYT (479 aa)) is GT-B glycosyltransferase. Residues 805-836 (PPPLPPKPLVKPSASKGSKRTQPRLSFRLFGA) are disordered.

It belongs to the glycosyltransferase 1 family. Plant sucrose synthase subfamily. As to expression, detected in the whole plant but more precisely confined to the vasculature in cotyledons, leaves, petals, anthers and roots. Also detected in developing siliques, young immature rosette and cauline leaves.

It localises to the secreted. The protein localises to the cell wall. The enzyme catalyses an NDP-alpha-D-glucose + D-fructose = a ribonucleoside 5'-diphosphate + sucrose + H(+). Sucrose-cleaving enzyme that provides UDP-glucose and fructose for various metabolic pathways. Functions in callose synthesis at the site of phloem sieve elements. This Arabidopsis thaliana (Mouse-ear cress) protein is Sucrose synthase 5 (SUS5).